The primary structure comprises 116 residues: MTNHKLIEAVTKSQLRTDLPSFRPGDTLRVHVRIIEGTRERIQVFEGVVIKRRGGGVSETFTVRKISSGVGVERTFPLHTPKIEKIEVKRRGKVRRAKLYYLRSLRGKAARIQEIR.

This sequence belongs to the bacterial ribosomal protein bL19 family.

Its function is as follows. This protein is located at the 30S-50S ribosomal subunit interface and may play a role in the structure and function of the aminoacyl-tRNA binding site. The polypeptide is Large ribosomal subunit protein bL19 (Staphylococcus aureus (strain USA300)).